Here is a 621-residue protein sequence, read N- to C-terminus: tRNA uridine 5-carboxymethylaminomethyl modification enzyme MnmG (621 aa).

9–14 (GGGHAG) is an FAD binding site. Position 270 to 284 (270 to 284 (GPRYCPSIEDKIVKF)) interacts with NAD(+).

Belongs to the MnmG family. As to quaternary structure, homodimer. Heterotetramer of two MnmE and two MnmG subunits. Requires FAD as cofactor.

The protein localises to the cytoplasm. NAD-binding protein involved in the addition of a carboxymethylaminomethyl (cmnm) group at the wobble position (U34) of certain tRNAs, forming tRNA-cmnm(5)s(2)U34. The polypeptide is tRNA uridine 5-carboxymethylaminomethyl modification enzyme MnmG (Borrelia garinii subsp. bavariensis (strain ATCC BAA-2496 / DSM 23469 / PBi) (Borreliella bavariensis)).